A 312-amino-acid polypeptide reads, in one-letter code: DNA-directed RNA polymerase subunit alpha (312 aa).

An alpha N-terminal domain (alpha-NTD) region spans residues 1-229 (MLQYQIDRID…ELFQPLATVT (229 aa)). The interval 240 to 312 (PSPEAQIPLE…ISIPQSRTSV (73 aa)) is alpha C-terminal domain (alpha-CTD).

This sequence belongs to the RNA polymerase alpha chain family. In cyanobacteria the RNAP catalytic core is composed of 2 alpha, 1 beta, 1 beta', 1 gamma and 1 omega subunit. When a sigma factor is associated with the core the holoenzyme is formed, which can initiate transcription.

The enzyme catalyses RNA(n) + a ribonucleoside 5'-triphosphate = RNA(n+1) + diphosphate. Its function is as follows. DNA-dependent RNA polymerase catalyzes the transcription of DNA into RNA using the four ribonucleoside triphosphates as substrates. The polypeptide is DNA-directed RNA polymerase subunit alpha (Prochlorococcus marinus (strain AS9601)).